A 697-amino-acid chain; its full sequence is Serine/threonine-protein kinase tousled-like 2 (697 aa).

2 disordered regions span residues 27–136 and 289–315; these read KAPL…TAPV and LAKR…NKTN. Residues 31–44 are compositionally biased toward polar residues; the sequence is NSESSNQSLCSLGS. The span at 46–62 shows a compositional bias: basic and acidic residues; the sequence is SDKELEQTPEKKQNDQR. A compositionally biased stretch (low complexity) spans 111–131; it reads SSPQHSLSNPLPLPSQQCSPP. Coiled coils occupy residues 264–293 and 334–372; these read AFQN…AKRK and FKLR…IHNE. The region spanning 387–666 is the Protein kinase domain; sequence YLLLHLLGRG…VQQLACDPYL (280 aa). Residues 393–401 and lysine 416 each bind ATP; that span reads LGRGGFSEV. Aspartate 517 functions as the Proton acceptor in the catalytic mechanism.

This sequence belongs to the protein kinase superfamily. Ser/Thr protein kinase family. As to quaternary structure, monomer. May form homodimers; homodimerization may enhance autophosphoylation and enzymatic activity. Heterodimer with TLK1. The cofactor is Mg(2+). Phosphorylated. Autophosphorylated; phosphorylation promotes the assembly of higher order oligomers and enzymatic activity.

It localises to the nucleus. Its subcellular location is the nucleoplasm. It is found in the cytoplasm. The protein localises to the perinuclear region. The protein resides in the cytoskeleton. It catalyses the reaction L-seryl-[protein] + ATP = O-phospho-L-seryl-[protein] + ADP + H(+). The enzyme catalyses L-threonyl-[protein] + ATP = O-phospho-L-threonyl-[protein] + ADP + H(+). In terms of biological role, serine/threonine-protein kinase involved in the process of chromatin assembly and probably also DNA replication, transcription, repair, and chromosome segregation. Negative regulator of amino acid starvation-induced autophagy. The chain is Serine/threonine-protein kinase tousled-like 2 from Xenopus tropicalis (Western clawed frog).